The chain runs to 273 residues: Dermonecrotic toxin LhSicTox-alphaIA1i (273 aa).

Histidine 5 is an active-site residue. Mg(2+) contacts are provided by glutamate 25 and aspartate 27. The active-site Nucleophile is histidine 41. Intrachain disulfides connect cysteine 45-cysteine 51 and cysteine 47-cysteine 190. Aspartate 85 contacts Mg(2+).

It belongs to the arthropod phospholipase D family. Class II subfamily. The cofactor is Mg(2+). As to expression, expressed by the venom gland.

It localises to the secreted. It catalyses the reaction an N-(acyl)-sphingosylphosphocholine = an N-(acyl)-sphingosyl-1,3-cyclic phosphate + choline. It carries out the reaction an N-(acyl)-sphingosylphosphoethanolamine = an N-(acyl)-sphingosyl-1,3-cyclic phosphate + ethanolamine. The enzyme catalyses a 1-acyl-sn-glycero-3-phosphocholine = a 1-acyl-sn-glycero-2,3-cyclic phosphate + choline. The catalysed reaction is a 1-acyl-sn-glycero-3-phosphoethanolamine = a 1-acyl-sn-glycero-2,3-cyclic phosphate + ethanolamine. Its function is as follows. Dermonecrotic toxins cleave the phosphodiester linkage between the phosphate and headgroup of certain phospholipids (sphingolipid and lysolipid substrates), forming an alcohol (often choline) and a cyclic phosphate. This toxin acts on sphingomyelin (SM). It may also act on ceramide phosphoethanolamine (CPE), lysophosphatidylcholine (LPC) and lysophosphatidylethanolamine (LPE), but not on lysophosphatidylserine (LPS), and lysophosphatidylglycerol (LPG). It acts by transphosphatidylation, releasing exclusively cyclic phosphate products as second products. Induces dermonecrosis, hemolysis, increased vascular permeability, edema, inflammatory response, and platelet aggregation. This chain is Dermonecrotic toxin LhSicTox-alphaIA1i, found in Loxosceles hirsuta (Recluse spider).